We begin with the raw amino-acid sequence, 288 residues long: 2-hydroxy-6-oxononadienedioate/2-hydroxy-6-oxononatrienedioate hydrolase (288 aa).

The AB hydrolase-1 domain maps to 39-274 (LVLLHGSGPG…RCGHWAQWEH (236 aa)). Residue His-268 is the Proton acceptor of the active site.

It belongs to the AB hydrolase superfamily. MhpC family. As to quaternary structure, homodimer.

It catalyses the reaction (2Z,4E)-2-hydroxy-6-oxonona-2,4-dienedioate + H2O = (2Z)-2-hydroxypenta-2,4-dienoate + succinate + H(+). The catalysed reaction is (2Z,4E,7E)-2-hydroxy-6-oxonona-2,4,7-trienedioate + H2O = (2Z)-2-hydroxypenta-2,4-dienoate + fumarate + H(+). It functions in the pathway aromatic compound metabolism; 3-phenylpropanoate degradation. Functionally, catalyzes the cleavage of the C5-C6 bond of 2-hydroxy-6-oxononadienedioate and 2-hydroxy-6-oxononatrienedioate, a dienol ring fission product of the bacterial meta-cleavage pathway for degradation of phenylpropionic acid. The protein is 2-hydroxy-6-oxononadienedioate/2-hydroxy-6-oxononatrienedioate hydrolase of Paraburkholderia phymatum (strain DSM 17167 / CIP 108236 / LMG 21445 / STM815) (Burkholderia phymatum).